The following is a 227-amino-acid chain: Phosphoglycolate phosphatase (227 aa).

Catalysis depends on aspartate 11, which acts as the Nucleophile. Mg(2+) is bound by residues aspartate 11, aspartate 13, and aspartate 176.

This sequence belongs to the HAD-like hydrolase superfamily. CbbY/CbbZ/Gph/YieH family. It depends on Mg(2+) as a cofactor.

The catalysed reaction is 2-phosphoglycolate + H2O = glycolate + phosphate. It functions in the pathway organic acid metabolism; glycolate biosynthesis; glycolate from 2-phosphoglycolate: step 1/1. Functionally, specifically catalyzes the dephosphorylation of 2-phosphoglycolate. Is involved in the dissimilation of the intracellular 2-phosphoglycolate formed during the DNA repair of 3'-phosphoglycolate ends, a major class of DNA lesions induced by oxidative stress. The protein is Phosphoglycolate phosphatase of Aliivibrio fischeri (strain ATCC 700601 / ES114) (Vibrio fischeri).